Reading from the N-terminus, the 200-residue chain is NADH-quinone oxidoreductase subunit C 1 (200 aa).

This sequence belongs to the complex I 30 kDa subunit family. In terms of assembly, NDH-1 is composed of 14 different subunits. Subunits NuoB, C, D, E, F, and G constitute the peripheral sector of the complex.

It is found in the cell inner membrane. The catalysed reaction is a quinone + NADH + 5 H(+)(in) = a quinol + NAD(+) + 4 H(+)(out). Functionally, NDH-1 shuttles electrons from NADH, via FMN and iron-sulfur (Fe-S) centers, to quinones in the respiratory chain. The immediate electron acceptor for the enzyme in this species is believed to be ubiquinone. Couples the redox reaction to proton translocation (for every two electrons transferred, four hydrogen ions are translocated across the cytoplasmic membrane), and thus conserves the redox energy in a proton gradient. This is NADH-quinone oxidoreductase subunit C 1 from Rhizobium etli (strain CIAT 652).